A 182-amino-acid chain; its full sequence is Glycerol-3-phosphate acyltransferase 1 (182 aa).

The next 5 membrane-spanning stretches (helical) occupy residues 5-25 (MQFL…AYIV), 54-74 (GYFI…VSIA), 81-101 (STFV…PIVF), 117-137 (IAFD…FYLI), and 157-177 (ILYS…VLIL).

The protein belongs to the PlsY family. In terms of assembly, probably interacts with PlsX.

The protein localises to the cell membrane. It carries out the reaction an acyl phosphate + sn-glycerol 3-phosphate = a 1-acyl-sn-glycero-3-phosphate + phosphate. Its pathway is lipid metabolism; phospholipid metabolism. Functionally, catalyzes the transfer of an acyl group from acyl-phosphate (acyl-PO(4)) to glycerol-3-phosphate (G3P) to form lysophosphatidic acid (LPA). This enzyme utilizes acyl-phosphate as fatty acyl donor, but not acyl-CoA or acyl-ACP. In Bacillus cereus (strain ATCC 10987 / NRS 248), this protein is Glycerol-3-phosphate acyltransferase 1.